A 681-amino-acid chain; its full sequence is Proline-rich receptor-like protein kinase PERK8 (681 aa).

Pro residues predominate over residues 1–11; the sequence is MSLVPPLPILS. Residues 1 to 231 form a disordered region; the sequence is MSLVPPLPIL…TLPSSSPGKS (231 aa). Residues 1 to 237 lie on the Extracellular side of the membrane; that stretch reads MSLVPPLPIL…PGKSEVGTGG (237 aa). N16 carries N-linked (GlcNAc...) asparagine glycosylation. Over residues 21–163 the composition is skewed to pro residues; that stretch reads APPPLQTQPT…SPPKPSPSTP (143 aa). The segment covering 177 to 191 has biased composition (low complexity); it reads TSASPPSSNPTDPST. Residues 192-201 show a composition bias toward pro residues; it reads LAPPPTPLPV. Over residues 214–229 the composition is skewed to polar residues; it reads PASNNGNNTLPSSSPG. A glycan (N-linked (GlcNAc...) asparagine) is linked at N220. Residues 238 to 258 traverse the membrane as a helical segment; the sequence is IVAIGVIVGLVFLSLFVMGVW. The Cytoplasmic portion of the chain corresponds to 259-681; that stretch reads FTRKRKRKDP…GSRDQSRFVP (423 aa). The region spanning 339–617 is the Protein kinase domain; it reads FSEKNLLGEG…SQVVRALDTL (279 aa). Residues 345–353 and K367 each bind ATP; that span reads LGEGGFGCV. At Y412 the chain carries Phosphotyrosine. The Proton acceptor role is filled by D463. S467 and S498 each carry phosphoserine. Residues T499 and T504 each carry the phosphothreonine modification. Residue Y512 is modified to Phosphotyrosine.

This sequence belongs to the protein kinase superfamily. Ser/Thr protein kinase family. In terms of assembly, interacts with KIPK1 and KIPK2 (via its cytosolic domain). Mostly expressed in seedlings, roots, inflorescence bolts and flower buds.

It localises to the cell membrane. It carries out the reaction L-seryl-[protein] + ATP = O-phospho-L-seryl-[protein] + ADP + H(+). It catalyses the reaction L-threonyl-[protein] + ATP = O-phospho-L-threonyl-[protein] + ADP + H(+). Could be involved in the negative regulation of root growth. The sequence is that of Proline-rich receptor-like protein kinase PERK8 (PERK8) from Arabidopsis thaliana (Mouse-ear cress).